Here is a 278-residue protein sequence, read N- to C-terminus: Trehalose/maltose transport system permease protein MalG (278 aa).

6 consecutive transmembrane segments (helical) span residues 12–32, 74–94, 106–126, 141–161, 186–206, and 242–262; these read IIGA…MIVV, IIIA…AAYA, IPIF…GYLF, LYFP…LSYF, IILP…FIAA, and GSVM…ALLF. In terms of domain architecture, ABC transmembrane type-1 spans 70–262; it reads LKNSIIIASL…IPLVIMALLF (193 aa).

It belongs to the binding-protein-dependent transport system permease family. In terms of assembly, the complex is composed of two ATP-binding proteins (MalK), two transmembrane proteins (MalG and MalF) and a solute-binding protein (MalE).

Its subcellular location is the cell membrane. Part of the ABC transporter complex MalEFGK involved in trehalose/maltose import. Responsible for the translocation of the substrate across the membrane. In Thermococcus litoralis (strain ATCC 51850 / DSM 5473 / JCM 8560 / NS-C), this protein is Trehalose/maltose transport system permease protein MalG (malG).